We begin with the raw amino-acid sequence, 227 residues long: Uracil-DNA glycosylase 2 (227 aa).

Asp67 acts as the Proton acceptor in catalysis.

The protein belongs to the uracil-DNA glycosylase (UDG) superfamily. UNG family.

Its subcellular location is the cytoplasm. It catalyses the reaction Hydrolyzes single-stranded DNA or mismatched double-stranded DNA and polynucleotides, releasing free uracil.. Excises uracil residues from the DNA which can arise as a result of misincorporation of dUMP residues by DNA polymerase or due to deamination of cytosine. This Streptomyces avermitilis (strain ATCC 31267 / DSM 46492 / JCM 5070 / NBRC 14893 / NCIMB 12804 / NRRL 8165 / MA-4680) protein is Uracil-DNA glycosylase 2 (ung2).